A 147-amino-acid polypeptide reads, in one-letter code: Hemoglobin subunit gamma (147 aa).

In terms of domain architecture, Globin spans 3–147 (HFTVEEKAVI…VAIALAHKYH (145 aa)). The heme b site is built by His-64 and His-93.

The protein belongs to the globin family. As to quaternary structure, heterotetramer of two alpha chains and two gamma chains in fetal hemoglobin (Hb F). Red blood cells.

Gamma chains make up the fetal hemoglobin F, in combination with alpha chains. The protein is Hemoglobin subunit gamma (HBG) of Cheirogaleus medius (Fat-tailed dwarf lemur).